The primary structure comprises 244 residues: Orotidine 5'-phosphate decarboxylase (244 aa).

Substrate is bound by residues Asp-12, Lys-34, 61–70 (DLKLFDIPNT), Thr-125, Arg-187, Gln-196, Gly-216, and Arg-217. The active-site Proton donor is the Lys-63.

It belongs to the OMP decarboxylase family. Type 1 subfamily. As to quaternary structure, homodimer.

It catalyses the reaction orotidine 5'-phosphate + H(+) = UMP + CO2. It participates in pyrimidine metabolism; UMP biosynthesis via de novo pathway; UMP from orotate: step 2/2. Functionally, catalyzes the decarboxylation of orotidine 5'-monophosphate (OMP) to uridine 5'-monophosphate (UMP). This is Orotidine 5'-phosphate decarboxylase from Dictyoglomus thermophilum (strain ATCC 35947 / DSM 3960 / H-6-12).